Consider the following 87-residue polypeptide: Small ribosomal subunit protein bS18 (87 aa).

The protein belongs to the bacterial ribosomal protein bS18 family. As to quaternary structure, part of the 30S ribosomal subunit. Forms a tight heterodimer with protein bS6.

In terms of biological role, binds as a heterodimer with protein bS6 to the central domain of the 16S rRNA, where it helps stabilize the platform of the 30S subunit. The sequence is that of Small ribosomal subunit protein bS18 from Nitratidesulfovibrio vulgaris (strain ATCC 29579 / DSM 644 / CCUG 34227 / NCIMB 8303 / VKM B-1760 / Hildenborough) (Desulfovibrio vulgaris).